The sequence spans 488 residues: Histamine H1 receptor (488 aa).

Over 1-29 the chain is Extracellular; sequence MSLPNTSSASEDKMCEGNRTAMASPQLLP. Residues N5 and N18 are each glycosylated (N-linked (GlcNAc...) asparagine). The helical transmembrane segment at 30–50 threads the bilayer; it reads LVVVLSSISLVTVGLNLLVLY. At 51-64 the chain is on the cytoplasmic side; that stretch reads AVRSERKLHTVGNL. Residues 65–89 form a helical membrane-spanning segment; that stretch reads YIVSLSVADLIVGAVVMPMNILYLI. At 90–97 the chain is on the extracellular side; the sequence is MTKWSLGR. Residues 98–123 form a helical membrane-spanning segment; that stretch reads PLCLFWLSMDYVASTASIFSVFILCI. Cysteines 100 and 180 form a disulfide. Positions 107 and 112 each coordinate histamine. The interval 107-112 is important for agonist binding; that stretch reads DYVAST. Residues 124 to 144 lie on the Cytoplasmic side of the membrane; sequence DRYRSVQQPLRYLRYRTKTRA. Residues T140 and T142 each carry the phosphothreonine modification. A helical transmembrane segment spans residues 145-164; sequence SATILGAWFLSFLWVIPILG. The Extracellular portion of the chain corresponds to 165–188; sequence WHHFTPLAPELREDKCETDFYNVT. A helical membrane pass occupies residues 189 to 211; sequence WFKIMTAIINFYLPTLLMLWFYV. N198 serves as a coordination point for histamine. At 212–417 the chain is on the cytoplasmic side; that stretch reads KIYKAVRRHC…LNRERKAAKQ (206 aa). A Phosphoserine modification is found at S230. Positions 245 to 337 are disordered; the sequence is KEGAKKPGKE…SQPKMDEQSL (93 aa). Residues 322–337 show a composition bias toward polar residues; it reads ANDQTLSQPKMDEQSL. Phosphoserine is present on residues S344, S347, S381, S383, S397, and S399. A helical membrane pass occupies residues 418–441; sequence LGCIMAAFILCWIPYFIFFMVIAF. Residues 425–429 form an important for agonist binding region; that stretch reads FILCW. Y432 serves as a coordination point for histamine. C442 and C445 are disulfide-bonded. Topologically, residues 442–447 are extracellular; the sequence is CNSCCS. A helical membrane pass occupies residues 448–470; it reads EPVHMFTIWLGYINSTLNPLIYP. Over 471–488 the chain is Cytoplasmic; the sequence is LCNENFKKTFKKILHIRS.

It belongs to the G-protein coupled receptor 1 family. Phosphorylation at sites in the second and third cytoplasmic loops independently contribute to agonist-induced receptor down-regulation.

It localises to the cell membrane. Functionally, G-protein-coupled receptor for histamine, a biogenic amine that functions as an immune modulator and a neurotransmitter. Through the H1 receptor, histamine mediates the contraction of smooth muscles and increases capillary permeability due to contraction of terminal venules. Also mediates neurotransmission in the central nervous system and thereby regulates circadian rhythms, emotional and locomotor activities as well as cognitive functions. The sequence is that of Histamine H1 receptor from Mus musculus (Mouse).